Reading from the N-terminus, the 187-residue chain is UPF0301 protein YqgE (187 aa).

This sequence belongs to the UPF0301 (AlgH) family.

In Escherichia coli O127:H6 (strain E2348/69 / EPEC), this protein is UPF0301 protein YqgE.